The chain runs to 315 residues: Methionyl-tRNA formyltransferase (315 aa).

115-118 (SLLP) contributes to the (6S)-5,6,7,8-tetrahydrofolate binding site.

This sequence belongs to the Fmt family.

The enzyme catalyses L-methionyl-tRNA(fMet) + (6R)-10-formyltetrahydrofolate = N-formyl-L-methionyl-tRNA(fMet) + (6S)-5,6,7,8-tetrahydrofolate + H(+). Its function is as follows. Attaches a formyl group to the free amino group of methionyl-tRNA(fMet). The formyl group appears to play a dual role in the initiator identity of N-formylmethionyl-tRNA by promoting its recognition by IF2 and preventing the misappropriation of this tRNA by the elongation apparatus. This chain is Methionyl-tRNA formyltransferase, found in Dehalococcoides mccartyi (strain ATCC BAA-2100 / JCM 16839 / KCTC 5957 / BAV1).